A 1247-amino-acid polypeptide reads, in one-letter code: SAM and SH3 domain-containing protein 1 (1247 aa).

Residues 1 to 39 (MEDAGAAGPGPEPEPEPEPEPEPAPEPEPEPKPGAGTSE) form a disordered region. Residues 13-28 (PEPEPEPEPEPAPEPE) are compositionally biased toward acidic residues. Ser90 is subject to Phosphoserine. 3 disordered regions span residues 126 to 145 (VERKNPLHKSNSEDSSVGKG), 221 to 257 (AALDPADWPDGSYPTFDGSSNCNSREQSDDETEESVK), and 316 to 344 (FFDGSPEKPPEDDSDSLTTSPSSSSLDTW). A Phosphoserine modification is found at Ser248. Residues 331–343 (SLTTSPSSSSLDT) are compositionally biased toward low complexity. A Phosphoserine modification is found at Ser407. Residues 449 to 573 (SLGKKVKSVK…DFTPSPYDTD (125 aa)) form a disordered region. Composition is skewed to low complexity over residues 468–484 (KYSSSVSEQDSGLDGMP) and 505–523 (GGSVESLRSSLSGQSSMSG). Over residues 524 to 536 (QTVSTTDSSTSNR) the composition is skewed to polar residues. The 62-residue stretch at 554–615 (PFCGRARVHT…KFIYVDVLSE (62 aa)) folds into the SH3 domain. The residue at position 614 (Ser614) is a Phosphoserine. 2 disordered regions span residues 616-639 (DEEKPKRPTRRRRKGRPPQPKSVE) and 713-810 (DSQG…LNKN). The segment covering 622–631 (RPTRRRRKGR) has biased composition (basic residues). The 65-residue stretch at 633-697 (PQPKSVEDLL…LTAVELLQEY (65 aa)) folds into the SAM 1 domain. Positions 746–765 (SAKSSTEPSLKSFSRNQLGN) are enriched in polar residues. Phosphoserine is present on residues Ser821 and Ser839. Disordered stretches follow at residues 846–884 (EPGAEQDVPTEVTEPPPQIVPEVPQKTTASSTKAQPLEQ), 903–946 (PQKL…LART), and 971–1065 (DAEQ…SELP). A required for interaction with TRAF6 region spans residues 852–860 (DVPTEVTEP). A Phosphothreonine modification is found at Thr858. A compositionally biased stretch (pro residues) spans 1050–1060 (GSPPSTRPPPW). The region spanning 1177–1241 (GCISSVSDWL…LSAARLFKLP (65 aa)) is the SAM 2 domain.

Interacts with GNAS. Interacts with IQGAP1. Interacts with TRAF6 (via C-terminus); the interaction is LPS-dependent. Interacts with MAP3K7, CHUK and IKBKB. In terms of tissue distribution, expressed ubiquitously, with highest levels in lung, placenta, spleen and thymus. Down-regulated in the majority (74%) of breast tumors in comparison with corresponding normal breast epithelial tissues. Expressed in the epidermis, epidermal keratinocytes, dermal fibroblasts and melanocytes.

Its subcellular location is the cytoplasm. In terms of biological role, is a positive regulator of NF-kappa-B signaling downstream of TLR4 activation. It acts as a scaffold molecule to assemble a molecular complex that includes TRAF6, MAP3K7, CHUK and IKBKB, thereby facilitating NF-kappa-B signaling activation. Regulates TRAF6 and MAP3K7 ubiquitination. Involved in the regulation of cell mobility. Regulates lipolysaccharide (LPS)-induced endothelial cell migration. Is involved in the regulation of skin pigmentation through the control of melanocyte migration in the epidermis. In Homo sapiens (Human), this protein is SAM and SH3 domain-containing protein 1 (SASH1).